A 79-amino-acid polypeptide reads, in one-letter code: Cytochrome b (79 aa).

The next 3 helical transmembrane spans lie at 1–7, 31–52, and 67–79; these read TALFLAM, WLIR…YLHI, and WNIG…LTMM. Heme b-binding residues include H37 and H51.

It belongs to the cytochrome b family. The cytochrome bc1 complex contains 3 respiratory subunits (MT-CYB, CYC1 and UQCRFS1), 2 core proteins (UQCRC1 and UQCRC2) and probably 6 low-molecular weight proteins. Heme b serves as cofactor.

Its subcellular location is the mitochondrion inner membrane. In terms of biological role, component of the ubiquinol-cytochrome c reductase complex (complex III or cytochrome b-c1 complex) that is part of the mitochondrial respiratory chain. The b-c1 complex mediates electron transfer from ubiquinol to cytochrome c. Contributes to the generation of a proton gradient across the mitochondrial membrane that is then used for ATP synthesis. This Julidochromis regani (Convict julie) protein is Cytochrome b (mt-cyb).